Reading from the N-terminus, the 310-residue chain is 1-aminocyclopropane-1-carboxylate oxidase 1 (310 aa).

Residues 113 to 133 are a coiled coil; that stretch reads EELSKTMDEYVCQLHKFAERL. In terms of domain architecture, Fe2OG dioxygenase spans 158 to 259; it reads PAFGTKVAKY…RLSIATFYNP (102 aa). The Fe cation site is built by histidine 182, aspartate 184, and histidine 240. Arginine 250 is a 2-oxoglutarate binding site.

The protein belongs to the iron/ascorbate-dependent oxidoreductase family. Fe(2+) is required as a cofactor.

The catalysed reaction is 1-aminocyclopropane-1-carboxylate + L-ascorbate + O2 = ethene + L-dehydroascorbate + hydrogen cyanide + CO2 + 2 H2O. It functions in the pathway alkene biosynthesis; ethylene biosynthesis via S-adenosyl-L-methionine; ethylene from S-adenosyl-L-methionine: step 2/2. In terms of biological role, enzyme involved in the ethylene biosynthesis. May promote stem elongation by maximizing the extensibility cells, possibly by activating ethylene biosynthesis, in response to very-long-chain fatty acids (VLCFAs C20:0 to C30:0). This is 1-aminocyclopropane-1-carboxylate oxidase 1 (ACO1) from Arabidopsis thaliana (Mouse-ear cress).